The sequence spans 375 residues: Heat shock protein 42 (375 aa).

Disordered stretches follow at residues 21-59 (TGQR…HPLY), 81-127 (SPEY…YYHC), 154-238 (PYEG…ETRM), and 347-375 (PKPK…TVEN). Over residues 22–48 (GQRGQQGYPRQPQRPQRYHPHYGQVHV) the composition is skewed to low complexity. Positions 49–58 (GGHHPRHHPL) are enriched in basic residues. 2 stretches are compositionally biased toward acidic residues: residues 85–101 (GYDD…EDMV) and 158–168 (TEPEIEANTEQ). The segment covering 169–197 (EGEKGEEKDKKDKSEAPKEEAGETNKEKP) has biased composition (basic and acidic residues). Serine 182, serine 213, serine 214, serine 215, and serine 223 each carry phosphoserine. The region spanning 237 to 356 (RMDLPFSPEV…PKPKKRIAIE (120 aa)) is the sHSP domain. Residues 357 to 367 (EIPDEELEFEE) are compositionally biased toward acidic residues.

The protein belongs to the small heat shock protein (HSP20) family. As to quaternary structure, forms oligomeric complexes. Interacts with itself.

The sequence is that of Heat shock protein 42 (HSP42) from Saccharomyces cerevisiae (strain ATCC 204508 / S288c) (Baker's yeast).